The following is a 248-amino-acid chain: MALLEICCYSMECALTAQRNGADRIELCAAPKEGGLTPSLGVLRSVREHITIPVHPIIRPRGGDFYYTDGEFAAMLEDIRLVRELGFPGLVTGVLTVDGDVDMSRMEKIMAAAGPLAVTFHRAFDMCANPFNALKNLADAGVSRVLTSGQKADAAQGLSIIMELIAQGDAPIIMAGAGVRANNLQNFLDAGVREVHSSAGVLLPSPMRYRNQGLSMSADIQADEYSRYRVEGAAVAEMKGIIVRHQAK.

It belongs to the CutC family. Homodimer.

Its subcellular location is the cytoplasm. In Salmonella schwarzengrund (strain CVM19633), this protein is PF03932 family protein CutC.